Consider the following 229-residue polypeptide: Ribonuclease 3 (229 aa).

The RNase III domain occupies 5-127 (LSRLERQLGY…LIGAIYLDAG (123 aa)). Position 40 (Glu-40) interacts with Mg(2+). Asp-44 is a catalytic residue. 2 residues coordinate Mg(2+): Asp-113 and Glu-116. Glu-116 is an active-site residue. Positions 154–224 (DPKTRLQEFL…AAAALIALGV (71 aa)) constitute a DRBM domain.

Belongs to the ribonuclease III family. Homodimer. The cofactor is Mg(2+).

The protein resides in the cytoplasm. The catalysed reaction is Endonucleolytic cleavage to 5'-phosphomonoester.. Its function is as follows. Digests double-stranded RNA. Involved in the processing of primary rRNA transcript to yield the immediate precursors to the large and small rRNAs (23S and 16S). Processes some mRNAs, and tRNAs when they are encoded in the rRNA operon. Processes pre-crRNA and tracrRNA of type II CRISPR loci if present in the organism. This is Ribonuclease 3 from Pseudomonas fluorescens (strain Pf0-1).